A 452-amino-acid chain; its full sequence is Inner membrane metabolite transport protein YdjE (452 aa).

Topologically, residues 1 to 20 are cytoplasmic; the sequence is MEQYDQIGARLDRLPLARFH. Residues 21–43 form a helical membrane-spanning segment; sequence YRIFGIISFSLLLTGFLSYSGNV. Residues 44–57 lie on the Periplasmic side of the membrane; the sequence is VLAKLVSNGWSNNF. A helical transmembrane segment spans residues 58 to 80; sequence LNAAFTSALMFGYFIGSLTGGFI. The Cytoplasmic segment spans residues 81–91; sequence GDYFGRRRAFR. The helical transmembrane segment at 92–114 threads the bilayer; it reads INLLIVGIAATGAAFVPDMYWLI. The Periplasmic portion of the chain corresponds to 115–117; it reads FFR. The chain crosses the membrane as a helical span at residues 118-140; the sequence is FLMGTGMGALIMVGYASFTEFIP. Over 141 to 152 the chain is Cytoplasmic; sequence ATVRGKWSARLS. Residues 153–175 traverse the membrane as a helical segment; the sequence is FVGNWSPMLSAAIGVVVIAFFSW. At 176 to 178 the chain is on the periplasmic side; it reads RIM. The chain crosses the membrane as a helical span at residues 179–198; sequence FLLGGIGILLAWFLSGKYFI. Residues 199–265 are Cytoplasmic-facing; it reads ESPRWLAGKG…KGEMLRRTLV (67 aa). The chain crosses the membrane as a helical span at residues 266–288; that stretch reads AITVLIAMNISLYTITVWIPTIF. The Periplasmic portion of the chain corresponds to 289-297; the sequence is VNSGIDVDK. The chain crosses the membrane as a helical span at residues 298–320; the sequence is SILMTAVIMIGAPVGIFIAALII. The Cytoplasmic segment spans residues 321-326; that stretch reads DHFPRR. The helical transmembrane segment at 327-344 threads the bilayer; it reads LFGSTLLIIIAVLGYIYS. Topologically, residues 345-353 are periplasmic; it reads IQTTEWAIL. Residues 354 to 376 traverse the membrane as a helical segment; that stretch reads IYGLVMIFFLYMYVCFASAVYIP. Over 377-388 the chain is Cytoplasmic; that stretch reads ELWPTHLRLRGS. A helical membrane pass occupies residues 389–411; sequence GFVNAVGRIVAVFTPYGVAALLT. The Periplasmic portion of the chain corresponds to 412–415; that stretch reads HYGS. Residues 416-438 form a helical membrane-spanning segment; the sequence is ITVFMVLGVMLLLCALVLSIFGI. Residues 439–452 are Cytoplasmic-facing; sequence ETRKVSLEEISEVN.

It belongs to the major facilitator superfamily. Sugar transporter (TC 2.A.1.1) family.

It localises to the cell inner membrane. The chain is Inner membrane metabolite transport protein YdjE (ydjE) from Escherichia coli (strain K12).